A 471-amino-acid polypeptide reads, in one-letter code: T-box transcription factor T (471 aa).

The segment at residues 24–196 is a DNA-binding region (T-box); sequence LWTKFCSLTN…HNPFAKAFLD (173 aa).

As to expression, developing notochord.

Its subcellular location is the nucleus. Its function is as follows. Involved in the transcriptional regulation of genes required for mesoderm differentiation. This is T-box transcription factor T from Halocynthia roretzi (Sea squirt).